We begin with the raw amino-acid sequence, 103 residues long: Flagellar hook-basal body complex protein FliE (103 aa).

This sequence belongs to the FliE family.

Its subcellular location is the bacterial flagellum basal body. The sequence is that of Flagellar hook-basal body complex protein FliE from Yersinia enterocolitica serotype O:8 / biotype 1B (strain NCTC 13174 / 8081).